The chain runs to 107 residues: SH3 domain-binding glutamic acid-rich-like protein 2 (107 aa).

The short motif at 61–67 (QGNPLPP) is the SH3-binding element.

It belongs to the SH3BGR family.

It is found in the nucleus. This is SH3 domain-binding glutamic acid-rich-like protein 2 (SH3BGRL2) from Bos taurus (Bovine).